Here is a 1824-residue protein sequence, read N- to C-terminus: E3 ubiquitin-protein ligase UBR1 (1824 aa).

Residues threonine 107–alanine 178 form a UBR-type zinc finger. Disordered regions lie at residues lysine 1006 to alanine 1043 and alanine 1073 to aspartate 1093. Positions glutamate 1033–alanine 1043 are enriched in basic and acidic residues. An RING-type; atypical zinc finger spans residues phenylalanine 1126–threonine 1220.

This sequence belongs to the E3 ubiquitin-protein ligase UBR1-like family.

It catalyses the reaction S-ubiquitinyl-[E2 ubiquitin-conjugating enzyme]-L-cysteine + [acceptor protein]-L-lysine = [E2 ubiquitin-conjugating enzyme]-L-cysteine + N(6)-ubiquitinyl-[acceptor protein]-L-lysine.. Its pathway is protein modification; protein ubiquitination. Functionally, E3 ubiquitin-protein ligase which is a component of the N-end rule pathway. Recognizes and binds to proteins bearing specific N-terminal residues that are destabilizing according to the N-end rule, leading to their ubiquitination and subsequent degradation. The protein is E3 ubiquitin-protein ligase UBR1 of Drosophila melanogaster (Fruit fly).